We begin with the raw amino-acid sequence, 4367 residues long: Dynein heavy chain, cytoplasmic (4367 aa).

Positions 1 to 13 are enriched in pro residues; sequence MMDSVPSPPPQPS. The tract at residues 1 to 20 is disordered; sequence MMDSVPSPPPQPSPDANGVA. The stem stretch occupies residues 1–1904; the sequence is MMDSVPSPPP…HIKMANAKLN (1904 aa). 5 coiled-coil regions span residues 676 to 693, 1176 to 1215, 1327 to 1351, 1557 to 1574, and 1637 to 1668; these read ARQI…VEQV, IKFA…EAVR, LTHF…KEAL, YKEF…LNRV, and NIPN…KERV. AAA stretches follow at residues 1905 to 2130, 2202 to 2460, 2566 to 2815, and 2909 to 3179; these read YGFE…VLVS, EAIR…FTVA, EVNT…WVRG, and TFCE…QGKI. 1943–1950 is an ATP binding site; it reads GPAGTGKT. A coiled-coil region spans residues 2195 to 2218; it reads ASLEKLQEAIRRLAAERQLVVNDI. Residues 2240–2247, 2605–2612, and 2947–2954 each bind ATP; these read GNSGSGKS, GPPGSGKT, and GVSGSGKT. Coiled coils occupy residues 3193-3296, 3423-3481, and 3778-3809; these read QYVK…LARA, PLRE…SRVQ, and VIET…VEQI. Positions 3193 to 3481 are stalk; sequence QYVKLYNEKR…AIKAEMSRVQ (289 aa). AAA regions lie at residues 3565–3794 and 4003–4215; these read LSTA…EISA and AERF…VIDT.

The protein belongs to the dynein heavy chain family. As to quaternary structure, consists of at least two heavy chains and a number of intermediate and light chains.

It is found in the cytoplasm. It localises to the cytoskeleton. In terms of biological role, cytoplasmic dynein acts as a motor for the intracellular retrograde motility of vesicles and organelles along microtubules. Dynein has ATPase activity; the force-producing power stroke is thought to occur on release of ADP. Required to maintain uniform nuclear distribution in hyphae. The polypeptide is Dynein heavy chain, cytoplasmic (ro-1) (Neurospora crassa (strain ATCC 24698 / 74-OR23-1A / CBS 708.71 / DSM 1257 / FGSC 987)).